The following is a 691-amino-acid chain: Elongation factor G (691 aa).

A tr-type G domain is found at 8–282 (EQTRNIGIMA…AVIDYLPAPT (275 aa)). GTP contacts are provided by residues 17–24 (AHIDAGKT), 81–85 (DTPGH), and 135–138 (NKMD).

This sequence belongs to the TRAFAC class translation factor GTPase superfamily. Classic translation factor GTPase family. EF-G/EF-2 subfamily.

The protein resides in the cytoplasm. Its function is as follows. Catalyzes the GTP-dependent ribosomal translocation step during translation elongation. During this step, the ribosome changes from the pre-translocational (PRE) to the post-translocational (POST) state as the newly formed A-site-bound peptidyl-tRNA and P-site-bound deacylated tRNA move to the P and E sites, respectively. Catalyzes the coordinated movement of the two tRNA molecules, the mRNA and conformational changes in the ribosome. This chain is Elongation factor G, found in Natranaerobius thermophilus (strain ATCC BAA-1301 / DSM 18059 / JW/NM-WN-LF).